The primary structure comprises 479 residues: Beta-monoglucosyldiacylglycerol synthase (479 aa).

4 helical membrane-spanning segments follow: residues 48-68 (AAVM…WVWG), 363-383 (FLLM…MALW), 389-409 (LLTP…YYGL), and 428-448 (LART…MPAV).

The protein belongs to the glycosyltransferase 2 family. Requires Mg(2+) as cofactor.

It localises to the membrane. It carries out the reaction a 1,2-diacyl-sn-glycerol + UDP-alpha-D-glucose = a 1,2-diacyl-3-O-(beta-D-glucopyranosyl)-sn-glycerol + UDP + H(+). Its function is as follows. Glucosyltransferase involved in the biosynthesis of the non-bilayer-forming membrane lipid beta-monoglucosyldiacylglycerol which contributes to regulate the properties and stability of the membrane. Catalyzes the transfer of a glucosyl residue from UDP-Glc to diacylglycerol (DAG) acceptor to form the corresponding beta-glucosyl-DAG (1,2-diacyl-3-O-(beta-D-glucopyranosyl)-sn-glycerol). It can only use UDP-Glc as sugar donor. Two types of DAG (dipalmitoyl-DAG (DPDAG) and 1-oleoyl-2-palmitoyl-DAG (OPDAG)) can be used as sugar acceptors, but OPDAG is preferred. The protein is Beta-monoglucosyldiacylglycerol synthase of Synechocystis sp. (strain ATCC 27184 / PCC 6803 / Kazusa).